Reading from the N-terminus, the 79-residue chain is Protein AC4 (79 aa).

2 disordered regions span residues 1-24 (MCSYSSKANTNARITDSSIWSPQP) and 36-79 (LNPA…MPRR). A compositionally biased stretch (low complexity) spans 38–47 (PAPTSSPTST). Residues 48 to 61 (RTEIQLNGENSRST) show a composition bias toward polar residues.

The protein belongs to the geminiviridae protein AC4/C4 family.

Pathogenicity determinant. May act as a suppressor of RNA-mediated gene silencing, also known as post-transcriptional gene silencing (PTGS), a mechanism of plant viral defense that limits the accumulation of viral RNAs. The sequence is that of Protein AC4 from Abutilon (Upland cotton).